The primary structure comprises 483 residues: Centrosomal protein cep57l1 (483 aa).

Residues 94–228 (EHKKVLESEK…AQVQTSLEVN (135 aa)) adopt a coiled-coil conformation. Disordered regions lie at residues 237-261 (AQNS…SKEP), 303-325 (PQVS…GGSR), and 416-460 (KEQP…SKAS). A compositionally biased stretch (basic residues) spans 243–252 (RKVKKKKQSK). A coiled-coil region spans residues 375–418 (EDLERELDYVVKQMEIKSDQIMKLKRHQLNVNKLKKTAKLLKEQ). Positions 420-435 (RPTSVTKLAADKQNTG) are enriched in polar residues.

This sequence belongs to the translokin family. As to quaternary structure, interacts with clip1, mis12, ndc80 and zwint. Interacts with gamma-tubulin.

The protein localises to the cytoplasm. Its subcellular location is the cytoskeleton. It localises to the microtubule organizing center. It is found in the centrosome. The protein resides in the chromosome. The protein localises to the centromere. Its subcellular location is the kinetochore. It localises to the spindle. In terms of biological role, required for spindle microtubule attachment to both kinetochores and centrosomes. Also functions to tether minus-ends of spindle microtubules to centrosomes. May act by forming ring-like structures around microtubules, or by serving as a cross-linker or scaffold at the attachment site. The chain is Centrosomal protein cep57l1 (cep57l1) from Xenopus tropicalis (Western clawed frog).